The chain runs to 230 residues: Sugar fermentation stimulation protein homolog (230 aa).

The protein belongs to the SfsA family.

This is Sugar fermentation stimulation protein homolog from Clostridium botulinum (strain Okra / Type B1).